Reading from the N-terminus, the 124-residue chain is MATINQLVRKPRKRKVAKSDVPALQACPQRRGVCTRVYTTTPKKPNSALRKVCRVRLTNGYEVSSYIGGEGHNLQEHSVVLIRGGRVKDLPGVRYHTVRGTLDTQGVQNRKQGRSKYGAKRPKS.

Residues 1-22 (MATINQLVRKPRKRKVAKSDVP) are disordered. 3-methylthioaspartic acid is present on Asp-89. The disordered stretch occupies residues 101–124 (TLDTQGVQNRKQGRSKYGAKRPKS). Positions 111-124 (KQGRSKYGAKRPKS) are enriched in basic residues.

Belongs to the universal ribosomal protein uS12 family. Part of the 30S ribosomal subunit. Contacts proteins S8 and S17. May interact with IF1 in the 30S initiation complex.

In terms of biological role, with S4 and S5 plays an important role in translational accuracy. Interacts with and stabilizes bases of the 16S rRNA that are involved in tRNA selection in the A site and with the mRNA backbone. Located at the interface of the 30S and 50S subunits, it traverses the body of the 30S subunit contacting proteins on the other side and probably holding the rRNA structure together. The combined cluster of proteins S8, S12 and S17 appears to hold together the shoulder and platform of the 30S subunit. The polypeptide is Small ribosomal subunit protein uS12 (Marinobacter nauticus (strain ATCC 700491 / DSM 11845 / VT8) (Marinobacter aquaeolei)).